A 377-amino-acid chain; its full sequence is Mitogen-activated protein kinase mpkC (377 aa).

Residues Tyr-20–Leu-299 form the Protein kinase domain. ATP is bound by residues Ile-26–Val-34 and Lys-49. Asp-141 acts as the Proton acceptor in catalysis. Thr-171 is modified (phosphothreonine). The TXY motif lies at Thr-171–Tyr-173. Tyr-173 carries the post-translational modification Phosphotyrosine.

The protein belongs to the protein kinase superfamily. Ser/Thr protein kinase family. MAP kinase subfamily. HOG1 sub-subfamily. Mg(2+) is required as a cofactor. Dually phosphorylated on Thr-171 and Tyr-173, which activates the enzyme.

The enzyme catalyses L-seryl-[protein] + ATP = O-phospho-L-seryl-[protein] + ADP + H(+). It carries out the reaction L-threonyl-[protein] + ATP = O-phospho-L-threonyl-[protein] + ADP + H(+). Activated by tyrosine and threonine phosphorylation. Functionally, mitogen-activated protein kinase required for growth on media where sorbitol or mannitol is the sole carbon source. The polypeptide is Mitogen-activated protein kinase mpkC (mpkc) (Neosartorya fischeri (strain ATCC 1020 / DSM 3700 / CBS 544.65 / FGSC A1164 / JCM 1740 / NRRL 181 / WB 181) (Aspergillus fischerianus)).